The sequence spans 474 residues: Glutamate--tRNA ligase (474 aa).

The short motif at 9–19 (PSPTGYLHVGG) is the 'HIGH' region element. A 'KMSKS' region motif is present at residues 240 to 244 (KLSKR). K243 provides a ligand contact to ATP.

The protein belongs to the class-I aminoacyl-tRNA synthetase family. Glutamate--tRNA ligase type 1 subfamily. Monomer.

Its subcellular location is the cytoplasm. The catalysed reaction is tRNA(Glu) + L-glutamate + ATP = L-glutamyl-tRNA(Glu) + AMP + diphosphate. Its function is as follows. Catalyzes the attachment of glutamate to tRNA(Glu) in a two-step reaction: glutamate is first activated by ATP to form Glu-AMP and then transferred to the acceptor end of tRNA(Glu). The polypeptide is Glutamate--tRNA ligase (Vibrio vulnificus (strain YJ016)).